The sequence spans 124 residues: MRRQEALVVTAGTASEASRDGEQPRPAGLVCRARVEPGGPQESRQQWKTFLYCEPHKRIKEVLEEELSIKRDECHVKSPTAVALDGIWSIRRNLPVGGMIPGQQSRNCSLPQTKYYSRHGGLRR.

Disordered stretches follow at residues 1 to 26 (MRRQEALVVTAGTASEASRDGEQPRP) and 100 to 124 (IPGQQSRNCSLPQTKYYSRHGGLRR). Residues 102–115 (GQQSRNCSLPQTKY) show a composition bias toward polar residues.

It localises to the cytoplasm. It is found in the cytoskeleton. The protein localises to the cilium basal body. This is an uncharacterized protein from Rattus norvegicus (Rat).